A 57-amino-acid polypeptide reads, in one-letter code: Large ribosomal subunit protein bL32A (57 aa).

The segment at 1-22 (MAVPARRTSKTKKRLRRTHEKL) is disordered. Over residues 7 to 20 (RTSKTKKRLRRTHE) the composition is skewed to basic residues.

It belongs to the bacterial ribosomal protein bL32 family.

In Enterococcus faecalis (strain ATCC 700802 / V583), this protein is Large ribosomal subunit protein bL32A (rpmF1).